A 261-amino-acid polypeptide reads, in one-letter code: Phosphatidylglycerol--prolipoprotein diacylglyceryl transferase (261 aa).

Transmembrane regions (helical) follow at residues 20–40, 54–74, and 94–114; these read LAIH…VWLA, IIDF…LYYV, and GGGA…VFSY. A 1,2-diacyl-sn-glycero-3-phospho-(1'-sn-glycerol) is bound at residue Arg139. The next 3 membrane-spanning stretches (helical) occupy residues 175-195, 205-225, and 235-255; these read MPTF…VMVF, GDIF…VEGM, and ARVS…LFIY.

This sequence belongs to the Lgt family.

The protein resides in the cell membrane. It carries out the reaction L-cysteinyl-[prolipoprotein] + a 1,2-diacyl-sn-glycero-3-phospho-(1'-sn-glycerol) = an S-1,2-diacyl-sn-glyceryl-L-cysteinyl-[prolipoprotein] + sn-glycerol 1-phosphate + H(+). Its pathway is protein modification; lipoprotein biosynthesis (diacylglyceryl transfer). Functionally, catalyzes the transfer of the diacylglyceryl group from phosphatidylglycerol to the sulfhydryl group of the N-terminal cysteine of a prolipoprotein, the first step in the formation of mature lipoproteins. The sequence is that of Phosphatidylglycerol--prolipoprotein diacylglyceryl transferase from Lactococcus lactis subsp. lactis (strain IL1403) (Streptococcus lactis).